Consider the following 226-residue polypeptide: Octanoyltransferase (226 aa).

Residues 34–216 (GEANELVWLL…AWTEAFGPVR (183 aa)) enclose the BPL/LPL catalytic domain. Substrate contacts are provided by residues 73–80 (RGGEYTYH), 145–147 (AIG), and 158–160 (GIA). The active-site Acyl-thioester intermediate is the Cys176.

This sequence belongs to the LipB family.

It localises to the cytoplasm. The enzyme catalyses octanoyl-[ACP] + L-lysyl-[protein] = N(6)-octanoyl-L-lysyl-[protein] + holo-[ACP] + H(+). The protein operates within protein modification; protein lipoylation via endogenous pathway; protein N(6)-(lipoyl)lysine from octanoyl-[acyl-carrier-protein]: step 1/2. Its function is as follows. Catalyzes the transfer of endogenously produced octanoic acid from octanoyl-acyl-carrier-protein onto the lipoyl domains of lipoate-dependent enzymes. Lipoyl-ACP can also act as a substrate although octanoyl-ACP is likely to be the physiological substrate. This chain is Octanoyltransferase, found in Maricaulis maris (strain MCS10) (Caulobacter maris).